A 95-amino-acid chain; its full sequence is MKITKVAVAGTLESSDVQVRVQPFDSLDIEINSSVAKQFGEQIEATVREVLAKLGITAAQVIVEDKGALDCVLQARVKTAAMRATDETINWEAVL.

Ser-14 bears the O-(phosphoribosyl dephospho-coenzyme A)serine mark.

It belongs to the CitD family. Oligomer with a subunit composition of (alpha,beta,gamma)6.

Its subcellular location is the cytoplasm. In terms of biological role, covalent carrier of the coenzyme of citrate lyase. The protein is Citrate lyase acyl carrier protein of Haemophilus influenzae (strain PittEE).